Consider the following 703-residue polypeptide: RING finger protein 214 (703 aa).

Disordered regions lie at residues 1–59 (MAAS…TITK), 104–134 (GSQS…VTRS), and 146–197 (SRNC…SSSL). N-acetylalanine is present on Ala2. 4 positions are modified to phosphoserine: Ser15, Ser40, Ser47, and Ser54. Over residues 37-59 (TKDSAQKQKNSPLLSVSSQTITK) the composition is skewed to polar residues. Phosphoserine occurs at positions 176 and 196. The stretch at 220–379 (QDIEKNLDKM…AEKEAELHLT (160 aa)) forms a coiled coil. The interval 486-552 (FPILNPALSQ…SAETPRPQPV (67 aa)) is disordered. The segment covering 493–504 (LSQPSQPSSPLP) has biased composition (low complexity). Phosphoserine is present on residues Ser497, Ser511, and Ser516. The span at 523–536 (PHMPPAASIPPPPG) shows a compositional bias: pro residues. Residues 658 to 700 (CLMCQKLVQPSELHPMACTHVLHKECIKFWAQTNTNDTCPFCP) form an RING-type; atypical zinc finger.

The protein is RING finger protein 214 (RNF214) of Homo sapiens (Human).